The chain runs to 555 residues: Formate--tetrahydrofolate ligase (555 aa).

65–72 provides a ligand contact to ATP; it reads TPAGEGKT.

This sequence belongs to the formate--tetrahydrofolate ligase family.

The enzyme catalyses (6S)-5,6,7,8-tetrahydrofolate + formate + ATP = (6R)-10-formyltetrahydrofolate + ADP + phosphate. The protein operates within one-carbon metabolism; tetrahydrofolate interconversion. The chain is Formate--tetrahydrofolate ligase from Caldanaerobacter subterraneus subsp. tengcongensis (strain DSM 15242 / JCM 11007 / NBRC 100824 / MB4) (Thermoanaerobacter tengcongensis).